Here is a 544-residue protein sequence, read N- to C-terminus: Cannabidiolic acid synthase (544 aa).

The signal sequence occupies residues 1-28 (MKCSTFSFWFVCKIIFFFFSFNIQTSIA). Residues C37 and C99 are joined by a disulfide bond. N-linked (GlcNAc...) asparagine glycosylation is found at N45 and N65. The FAD-binding PCMH-type domain occupies 77–251 (TTPKPLVIVT…VAWKIRLVAV (175 aa)). FAD-binding positions include 109 to 115 (TRSGGHD) and S120. Positions 114-176 (HDSEGMSYIS…ENLSLAAGYC (63 aa)) form a cross-link, 6-(S-cysteinyl)-8alpha-(pros-histidyl)-FAD (His-Cys). N168 carries an N-linked (GlcNAc...) asparagine glycan. Residues C176, 180-184 (CAGGH), Y190, E236, and I241 each bind FAD. H291 lines the cannabigerolate pocket. 3 N-linked (GlcNAc...) asparagine glycosylation sites follow: N296, N304, and N328. Residues Y416 and E441 each coordinate cannabigerolate. FAD is bound at residue 480-482 (YLN). Y483 acts as the Proton acceptor in catalysis. A glycan (N-linked (GlcNAc...) asparagine) is linked at N498.

It belongs to the oxygen-dependent FAD-linked oxidoreductase family. Monomer. It depends on FAD as a cofactor. Glycosylated. Post-translationally, the FAD cofactor is bound via a bicovalent 6-S-cysteinyl, 8alpha-N1-histidyl FAD linkage. Expressed in young leaves.

The protein resides in the secreted. The protein localises to the extracellular space. It is found in the apoplast. It carries out the reaction cannabigerolate + O2 = cannabidiolate + H2O2. It participates in secondary metabolite biosynthesis; terpenoid biosynthesis. With respect to regulation, inhibited by Hg(2+). Functionally, oxidoreductase involved in the biosynthesis of cannabinoids-related terpenophenolic natural products, which have pharmacological activity. Catalyzes the stereoselective oxidative cyclization of the monoterpene moiety in cannabigerolic acid (CBGA), producing cannabidiolate (CBDA), the major cannabioid in fiber-type Cannabis plants. Can also use cannabinerolic acid as substrate, but not cannabigerol or cannabinerol. The polypeptide is Cannabidiolic acid synthase (Cannabis sativa (Hemp)).